The chain runs to 356 residues: Glucose-1-phosphate thymidylyltransferase (356 aa).

2 residues coordinate Mg(2+): Asp107 and Asp221.

This sequence belongs to the glucose-1-phosphate thymidylyltransferase family. Mg(2+) serves as cofactor.

The enzyme catalyses dTTP + alpha-D-glucose 1-phosphate + H(+) = dTDP-alpha-D-glucose + diphosphate. It functions in the pathway antibiotic biosynthesis. Involved in the biosynthesis of the two 2,6-deoxysugars, dTDP-L-oleandrose and dTDP-D-desosamine, attached to the macrolactone ring oleandolide to produce the aglycone antibiotic oleandomycin. Catalyzes the formation of dTDP-glucose from deoxythymidine triphosphate (dTTP) and glucose 1-phosphate. The sequence is that of Glucose-1-phosphate thymidylyltransferase from Streptomyces antibioticus.